Here is a 117-residue protein sequence, read N- to C-terminus: NADH-ubiquinone oxidoreductase chain 3 (117 aa).

3 consecutive transmembrane segments (helical) span residues 8–28 (LIYFLFSLALASLIIFLSFIF), 61–81 (LVAILFIIFDLEVTFLFPWAV), and 86–106 (IGFFGFWTMMAFLIILTIGFI).

Belongs to the complex I subunit 3 family.

It localises to the mitochondrion membrane. The catalysed reaction is a ubiquinone + NADH + 5 H(+)(in) = a ubiquinol + NAD(+) + 4 H(+)(out). Functionally, core subunit of the mitochondrial membrane respiratory chain NADH dehydrogenase (Complex I) that is believed to belong to the minimal assembly required for catalysis. Complex I functions in the transfer of electrons from NADH to the respiratory chain. The immediate electron acceptor for the enzyme is believed to be ubiquinone. The polypeptide is NADH-ubiquinone oxidoreductase chain 3 (ND3) (Tetraselmis subcordiformis (Marine green alga)).